Reading from the N-terminus, the 434-residue chain is Tol-Pal system protein TolB (434 aa).

A signal peptide spans 1–28; the sequence is MQQTCKRKIWMQISVALVTSLWMISAQA.

This sequence belongs to the TolB family. The Tol-Pal system is composed of five core proteins: the inner membrane proteins TolA, TolQ and TolR, the periplasmic protein TolB and the outer membrane protein Pal. They form a network linking the inner and outer membranes and the peptidoglycan layer.

It localises to the periplasm. In terms of biological role, part of the Tol-Pal system, which plays a role in outer membrane invagination during cell division and is important for maintaining outer membrane integrity. In Alcanivorax borkumensis (strain ATCC 700651 / DSM 11573 / NCIMB 13689 / SK2), this protein is Tol-Pal system protein TolB.